Consider the following 128-residue polypeptide: KESSAKKFQRQHIDSSGSPSTNPNYCNAMMKSRNMTQERCKPVNTFVHEPLADVQAVCFQKNVPCKNGQSNCYESTSNMHITDCRLTSNSKFPDCLYRTSQEEKSIIVACEGNPYVPVHFDASVAASA.

Residues 1 to 25 (KESSAKKFQRQHIDSSGSPSTNPNY) form a disordered region. Positions 7 and 10 each coordinate substrate. His12 acts as the Proton acceptor in catalysis. Over residues 14–25 (DSSGSPSTNPNY) the composition is skewed to polar residues. 4 disulfide bridges follow: Cys26–Cys84, Cys40–Cys95, Cys58–Cys110, and Cys65–Cys72. The N-linked (GlcNAc...) asparagine glycan is linked to Asn34. Substrate-binding positions include 41–45 (KPVNT), Lys66, and Arg85. His119 functions as the Proton donor in the catalytic mechanism.

Belongs to the pancreatic ribonuclease family. As to quaternary structure, monomer. Interacts with and forms tight 1:1 complexes with RNH1. Dimerization of two such complexes may occur. Interaction with RNH1 inhibits this protein. Pancreas.

It is found in the secreted. The enzyme catalyses an [RNA] containing cytidine + H2O = an [RNA]-3'-cytidine-3'-phosphate + a 5'-hydroxy-ribonucleotide-3'-[RNA].. The catalysed reaction is an [RNA] containing uridine + H2O = an [RNA]-3'-uridine-3'-phosphate + a 5'-hydroxy-ribonucleotide-3'-[RNA].. Its function is as follows. Endonuclease that catalyzes the cleavage of RNA on the 3' side of pyrimidine nucleotides. Acts on single-stranded and double-stranded RNA. This Proechimys guairae (Guaira spiny rat) protein is Ribonuclease pancreatic (RNASE1).